The sequence spans 508 residues: UTP--glucose-1-phosphate uridylyltransferase (508 aa).

At S13 the chain carries Phosphoserine. Residues 113–116 (LNGG), K127, Q190, and G222 contribute to the UTP site. Residue 115 to 116 (GG) coordinates substrate. K127 contributes to the Mg(2+) binding site. Residues H223 and 251-253 (NID) each bind substrate. UTP contacts are provided by D253 and K396. D253 provides a ligand contact to Mg(2+). K396 is a catalytic residue. T426 is modified (phosphothreonine). At S434 the chain carries Phosphoserine. K438 carries the post-translational modification N6-acetyllysine. 2 positions are modified to phosphoserine: S448 and S461. Positions 457–508 (HLTVSGDVTFGKNVSLKGTVIIIANHGDRIDIPPGAVLENKIVSGNLRILDH) are oligomerization. Positions 502-503 (NL) are critical for end-to-end subunit interaction.

The protein belongs to the UDPGP type 1 family. Homooctamer.

The protein localises to the cytoplasm. It catalyses the reaction alpha-D-glucose 1-phosphate + UTP + H(+) = UDP-alpha-D-glucose + diphosphate. The protein operates within glycan biosynthesis; glycogen biosynthesis. Its function is as follows. UTP--glucose-1-phosphate uridylyltransferase catalyzing the conversion of glucose-1-phosphate into UDP-glucose, a crucial precursor for the production of glycogen. The sequence is that of UTP--glucose-1-phosphate uridylyltransferase (Ugp2) from Mus musculus (Mouse).